We begin with the raw amino-acid sequence, 464 residues long: MVRLAAELLLLLGLLLLTLHITVLRGSGAADGPDAAAGNASQAQLQNNLNVGSDTTSETSFSLSKEAPREHLDHQAAHQPFPRPRFRQETGHPSLQRDFPRSFLLDLPNFPDLSKADINGQNPNIQVTIEVVDGPDSEADKDQHPENKPSWSVPSPDWRAWWQRSLSLARANSGDQDYKYDSTSDDSNFLNPPRGWDHTAPGHRTFETKDQPEYDSTDGEGDWSLWSVCSVTCGNGNQKRTRSCGYACTATESRTCDRPNCPGIEDTFRTAATEVSLLAGSEEFNATKLFEVDTDSCERWMSCKSEFLKKYMHKVMNDLPSCPCSYPTEVAYSTADIFDRIKRKDFRWKDASGPKEKLEIYKPTARYCIRSMLSLESTTLAAQHCCYGDNMQLITRGKGAGTPNLISTEFSAELHYKVDVLPWIICKGDWSRYNEARPPNNGQKCTESPSDEDYIKQFQEAREY.

A signal peptide spans 1 to 29; it reads MVRLAAELLLLLGLLLLTLHITVLRGSGA. N-linked (GlcNAc...) asparagine glycosylation occurs at Asn39. Disordered stretches follow at residues 50 to 98, 135 to 155, and 173 to 219; these read NVGS…LQRD, PDSE…SVPS, and SGDQ…STDG. The span at 51-63 shows a compositional bias: polar residues; the sequence is VGSDTTSETSFSL. 2 stretches are compositionally biased toward basic and acidic residues: residues 66-76 and 138-147; these read EAPREHLDHQA and EADKDQHPEN. One can recognise a TSP type-1 domain in the interval 218–262; the sequence is DGEGDWSLWSVCSVTCGNGNQKRTRSCGYACTATESRTCDRPNCP. Intrachain disulfides connect Cys229/Cys256, Cys233/Cys261, and Cys244/Cys248. Positions 289–452 constitute an AMOP domain; that stretch reads LFEVDTDSCE…QKCTESPSDE (164 aa).

Belongs to the isthmin family. Interacts with integrin ITGAV/ITGB5.

The protein resides in the secreted. Acts as an angiogenesis inhibitor. This chain is Isthmin-1 (ISM1), found in Homo sapiens (Human).